The primary structure comprises 98 residues: Protein Frey 1 (98 aa).

Residues 13-29 (AGLSLFLHLILAVALLR) form a helical membrane-spanning segment. The tract at residues 60–87 (YGILPKHPRPRGPRPLLSRAQQRKRDGP) is disordered.

Interacts with SPPL2C (via active sites); the interaction stabilizes FREY1 protein and inhibits SPPL2C proteolytic activity. Interacts with IZUMO1; the interaction retains IZUMO1 at the endoplasmic reticulum membrane and coordinates IZUMO1 complex assembly.

The protein localises to the endoplasmic reticulum membrane. In terms of biological role, key regulator for male fertility expressed transiently in round spermatids where it recruits IZUMO1 at the endoplasmic reticulum (ER) membrane and coordinates the oolemmal binding multimeric complex (IZUMO1 complex) assembly. Upon complete assembly of the IZUMO1 complex, its ER retention is released, facilitating IZUMO1 complex export to the acrosome. Through the interaction with SPPL2C, inhibits its intramembrane protease activity directly accessing the catalytic center of an I-CLiP. The polypeptide is Protein Frey 1 (Homo sapiens (Human)).